Reading from the N-terminus, the 223-residue chain is Ribose-5-phosphate isomerase A (223 aa).

Residues 26–29 (TGST), 82–85 (DGAD), and 95–98 (KGGG) each bind substrate. Residue E104 is the Proton acceptor of the active site. K122 is a substrate binding site.

It belongs to the ribose 5-phosphate isomerase family. Homodimer.

The catalysed reaction is aldehydo-D-ribose 5-phosphate = D-ribulose 5-phosphate. It participates in carbohydrate degradation; pentose phosphate pathway; D-ribose 5-phosphate from D-ribulose 5-phosphate (non-oxidative stage): step 1/1. Catalyzes the reversible conversion of ribose-5-phosphate to ribulose 5-phosphate. The polypeptide is Ribose-5-phosphate isomerase A (Streptococcus agalactiae serotype V (strain ATCC BAA-611 / 2603 V/R)).